Here is a 518-residue protein sequence, read N- to C-terminus: Crotonobetaine/carnitine--CoA ligase (518 aa).

This sequence belongs to the ATP-dependent AMP-binding enzyme family.

It catalyses the reaction 4-(trimethylamino)butanoate + ATP + CoA = 4-(trimethylamino)butanoyl-CoA + AMP + diphosphate. The enzyme catalyses crotonobetaine + ATP + CoA = crotonobetainyl-CoA + AMP + diphosphate. The catalysed reaction is (R)-carnitine + ATP + CoA = (R)-carnitinyl-CoA + AMP + diphosphate. It functions in the pathway amine and polyamine metabolism; carnitine metabolism. In terms of biological role, catalyzes the transfer of CoA to carnitine, generating the initial carnitinyl-CoA needed for the CaiB reaction cycle. Also has activity toward crotonobetaine and gamma-butyrobetaine. This chain is Crotonobetaine/carnitine--CoA ligase, found in Proteus sp. (strain LE138).